Consider the following 668-residue polypeptide: 1-deoxy-D-xylulose-5-phosphate synthase (668 aa).

Thiamine diphosphate contacts are provided by residues histidine 105 and 146–148 (AHS). Aspartate 177 is a Mg(2+) binding site. Residues 178-179 (GA), asparagine 206, tyrosine 316, and glutamate 398 each bind thiamine diphosphate. Asparagine 206 provides a ligand contact to Mg(2+).

This sequence belongs to the transketolase family. DXPS subfamily. Homodimer. It depends on Mg(2+) as a cofactor. Thiamine diphosphate is required as a cofactor.

It carries out the reaction D-glyceraldehyde 3-phosphate + pyruvate + H(+) = 1-deoxy-D-xylulose 5-phosphate + CO2. Its pathway is metabolic intermediate biosynthesis; 1-deoxy-D-xylulose 5-phosphate biosynthesis; 1-deoxy-D-xylulose 5-phosphate from D-glyceraldehyde 3-phosphate and pyruvate: step 1/1. Catalyzes the acyloin condensation reaction between C atoms 2 and 3 of pyruvate and glyceraldehyde 3-phosphate to yield 1-deoxy-D-xylulose-5-phosphate (DXP). This Nitrobacter hamburgensis (strain DSM 10229 / NCIMB 13809 / X14) protein is 1-deoxy-D-xylulose-5-phosphate synthase.